Here is a 185-residue protein sequence, read N- to C-terminus: Casparian strip membrane protein 2 (185 aa).

The Cytoplasmic portion of the chain corresponds to 1–25 (MKAVSIEAGEGSKAKRVHGVNRGIS). Residues 26–46 (VFDLVLRIVALVGTLASAVAM) traverse the membrane as a helical segment. Residues 47-73 (GTADQALSFSTQIVNFEAQYDDIDAFK) lie on the Extracellular side of the membrane. A helical transmembrane segment spans residues 74 to 94 (FFVVSNSITCVYLALSIPISI). Residues 95-106 (FHIIRSRAGKSR) lie on the Cytoplasmic side of the membrane. Residues 107-127 (VLLIVLDAIMLVFLTSGASAA) traverse the membrane as a helical segment. At 128–160 (AAIVYLAHNGNTSTNWFSICQQYTDFCQRSAGS) the chain is on the extracellular side. Asparagine 138 carries N-linked (GlcNAc...) asparagine glycosylation. A helical membrane pass occupies residues 161-181 (LIGSFGAMALMVLLIILSSIA). The Cytoplasmic portion of the chain corresponds to 182–185 (LSRR).

This sequence belongs to the Casparian strip membrane proteins (CASP) family. Homodimer and heterodimers.

The protein resides in the cell membrane. Functionally, regulates membrane-cell wall junctions and localized cell wall deposition. Required for establishment of the Casparian strip membrane domain (CSD) and the subsequent formation of Casparian strips, a cell wall modification of the root endodermis that determines an apoplastic barrier between the intraorganismal apoplasm and the extraorganismal apoplasm and prevents lateral diffusion. This chain is Casparian strip membrane protein 2, found in Solanum demissum (Wild potato).